A 147-amino-acid polypeptide reads, in one-letter code: Biogenesis of lysosome-related organelles complex 1 subunit 1 (147 aa).

Disordered stretches follow at residues 1 to 25 (MLTS…VRRK) and 125 to 147 (SSGA…PSAT).

Belongs to the BLOC1S1 family. Component of the biogenesis of lysosome-related organelles complex-1 (BLOC-1) composed of Blos1, Blos2, Blos3, Blos4, Dysb, Muted, Pldn and Snapin. Interacts with Pldn.

Functionally, component of the biogenesis of lysosome-related organelles complex-1 (BLOC-1) involved in pigment granule biogenesis and membrane trafficking in synapses. In response to high synaptic activity at neuromuscular junctions, stabilizes Pldn protein levels and, together with Pldn, plays a role in promoting efficient synaptic vesicle recycling and re-formation through early endosomes. The sequence is that of Biogenesis of lysosome-related organelles complex 1 subunit 1 from Drosophila melanogaster (Fruit fly).